Here is a 311-residue protein sequence, read N- to C-terminus: Catechol 1,2-dioxygenase (311 aa).

Residue tyrosine 164 participates in catechol binding. Positions 164, 200, 224, and 226 each coordinate Fe cation. 224–226 (HIH) lines the catechol pocket.

The protein belongs to the intradiol ring-cleavage dioxygenase family. In terms of assembly, homodimer. Fe(3+) serves as cofactor.

It carries out the reaction catechol + O2 = cis,cis-muconate + 2 H(+). It functions in the pathway aromatic compound metabolism; beta-ketoadipate pathway; 5-oxo-4,5-dihydro-2-furylacetate from catechol: step 1/3. This Acinetobacter baylyi (strain ATCC 33305 / BD413 / ADP1) protein is Catechol 1,2-dioxygenase.